Consider the following 237-residue polypeptide: NAD-dependent protein deacylase (237 aa).

One can recognise a Deacetylase sirtuin-type domain in the interval 1 to 235; the sequence is MRVVVLSGAG…PGLLQRLPAL (235 aa). 8 to 28 is a binding site for NAD(+); sequence GAGISAESDVPTFRDDKNGLW. Substrate-binding residues include tyrosine 53 and arginine 56. Residue 86–89 coordinates NAD(+); sequence QNVD. Histidine 104 acts as the Proton acceptor in catalysis. Zn(2+)-binding residues include cysteine 112, cysteine 115, cysteine 138, and cysteine 140. NAD(+) contacts are provided by residues 177–179, 203–205, and alanine 221; these read GTS and NPE.

Belongs to the sirtuin family. Class III subfamily. The cofactor is Zn(2+).

It localises to the cytoplasm. It carries out the reaction N(6)-acetyl-L-lysyl-[protein] + NAD(+) + H2O = 2''-O-acetyl-ADP-D-ribose + nicotinamide + L-lysyl-[protein]. It catalyses the reaction N(6)-succinyl-L-lysyl-[protein] + NAD(+) + H2O = 2''-O-succinyl-ADP-D-ribose + nicotinamide + L-lysyl-[protein]. In terms of biological role, NAD-dependent lysine deacetylase and desuccinylase that specifically removes acetyl and succinyl groups on target proteins. Modulates the activities of several proteins which are inactive in their acylated form. This Mycobacterium leprae (strain TN) protein is NAD-dependent protein deacylase.